The following is a 208-amino-acid chain: Histone H1.3 (208 aa).

An N-acetylserine modification is found at S2. In terms of domain architecture, H15 spans 37-113 (AHPPYINMVT…GASGRFRVTE (77 aa)). Residues 113-208 (EKKAAAAKKP…PAKKAVAPKT (96 aa)) are disordered. Basic residues-rich tracts occupy residues 148 to 158 (KAKKTTATKTK) and 165 to 191 (KKVK…KSAP). The segment covering 192–208 (KKAAAAKPAKKAVAPKT) has biased composition (low complexity).

The protein belongs to the histone H1/H5 family.

It is found in the nucleus. The protein localises to the chromosome. In terms of biological role, histones H1 are necessary for the condensation of nucleosome chains into higher-order structures. The polypeptide is Histone H1.3 (hil-3) (Caenorhabditis elegans).